We begin with the raw amino-acid sequence, 71 residues long: V-type proton ATPase subunit e (71 aa).

At 1–2 (MS) the chain is on the lumenal side. A helical membrane pass occupies residues 3–23 (FFHVVFVAFVIAAIGAAGWFV). At 24–35 (TPKGKNQTLLRT) the chain is on the cytoplasmic side. The chain crosses the membrane as a helical span at residues 36-56 (SLLLTLTCCYLMWAITYLCQL). Residues 57–71 (HPLITPRRSDLRMEY) lie on the Lumenal side of the membrane.

It belongs to the V-ATPase e1/e2 subunit family. In terms of assembly, V-ATPase is a heteromultimeric enzyme composed of a peripheral catalytic V1 complex (components A to H) attached to an integral membrane V0 proton pore complex (components: a, c, c', c'', d, e, f and VOA1).

It localises to the vacuole membrane. Subunit of the V0 complex of vacuolar(H+)-ATPase (V-ATPase), a multisubunit enzyme composed of a peripheral complex (V1) that hydrolyzes ATP and a membrane integral complex (V0) that translocates protons. V-ATPase is responsible for acidifying and maintaining the pH of intracellular compartments. In Cryptococcus neoformans var. neoformans serotype D (strain JEC21 / ATCC MYA-565) (Filobasidiella neoformans), this protein is V-type proton ATPase subunit e (VMA9).